The sequence spans 346 residues: Biotin synthase (346 aa).

The 219-residue stretch at 38–256 (RQVQVSTLLS…IAVARIMMPT (219 aa)) folds into the Radical SAM core domain. The [4Fe-4S] cluster site is built by C53, C57, and C60. Residues C97, C128, C188, and R260 each contribute to the [2Fe-2S] cluster site.

Belongs to the radical SAM superfamily. Biotin synthase family. As to quaternary structure, homodimer. [4Fe-4S] cluster is required as a cofactor. The cofactor is [2Fe-2S] cluster.

The enzyme catalyses (4R,5S)-dethiobiotin + (sulfur carrier)-SH + 2 reduced [2Fe-2S]-[ferredoxin] + 2 S-adenosyl-L-methionine = (sulfur carrier)-H + biotin + 2 5'-deoxyadenosine + 2 L-methionine + 2 oxidized [2Fe-2S]-[ferredoxin]. The protein operates within cofactor biosynthesis; biotin biosynthesis; biotin from 7,8-diaminononanoate: step 2/2. Functionally, catalyzes the conversion of dethiobiotin (DTB) to biotin by the insertion of a sulfur atom into dethiobiotin via a radical-based mechanism. In Escherichia coli (strain K12 / DH10B), this protein is Biotin synthase.